The chain runs to 394 residues: Elongation factor Tu (394 aa).

The 195-residue stretch at 10 to 204 folds into the tr-type G domain; sequence KPHVNVGTIG…AMDDYIPAPE (195 aa). The segment at 19–26 is G1; that stretch reads GHVDHGKT. A GTP-binding site is contributed by 19-26; it reads GHVDHGKT. Residue T26 coordinates Mg(2+). Residues 60–64 are G2; that stretch reads GITIN. The segment at 81–84 is G3; sequence DCPG. GTP contacts are provided by residues 81 to 85 and 136 to 139; these read DCPGH and NKCD. Residues 136-139 are G4; the sequence is NKCD. The tract at residues 174-176 is G5; that stretch reads SAL.

The protein belongs to the TRAFAC class translation factor GTPase superfamily. Classic translation factor GTPase family. EF-Tu/EF-1A subfamily. Monomer.

It localises to the cytoplasm. It catalyses the reaction GTP + H2O = GDP + phosphate + H(+). GTP hydrolase that promotes the GTP-dependent binding of aminoacyl-tRNA to the A-site of ribosomes during protein biosynthesis. This chain is Elongation factor Tu, found in Francisella tularensis subsp. holarctica (strain FTNF002-00 / FTA).